Consider the following 219-residue polypeptide: Transmembrane protein 17A (219 aa).

N-linked (GlcNAc...) asparagine glycans are attached at residues Asn-18 and Asn-27. 4 consecutive transmembrane segments (helical) span residues 56 to 76, 83 to 103, 121 to 141, and 153 to 173; these read MMLY…LLML, LPVY…IFEV, LAGF…FFIT, and AVHS…FLAL.

The protein belongs to the TMEM17 family. As to quaternary structure, part of the tectonic-like complex (also named B9 complex).

It is found in the cell projection. The protein localises to the cilium membrane. In terms of biological role, transmembrane component of the tectonic-like complex, a complex localized at the transition zone of primary cilia and acting as a barrier that prevents diffusion of transmembrane proteins between the cilia and plasma membranes. Required for ciliogenesis and sonic hedgehog/SHH signaling. This chain is Transmembrane protein 17A (tmem17a), found in Danio rerio (Zebrafish).